The chain runs to 65 residues: Large ribosomal subunit protein bL35 (65 aa).

The interval 1-25 is disordered; the sequence is MPKMKSHRGAAKRFKKTGTGKLKRA.

It belongs to the bacterial ribosomal protein bL35 family.

In Clostridium botulinum (strain Alaska E43 / Type E3), this protein is Large ribosomal subunit protein bL35.